The following is a 362-amino-acid chain: GDSL esterase/lipase 6 (362 aa).

Residues 1–23 form the signal peptide; the sequence is MSSSSSMDLLMCLLLLISPVVLA. Serine 38 serves as the catalytic Nucleophile. 5 N-linked (GlcNAc...) asparagine glycosylation sites follow: asparagine 50, asparagine 103, asparagine 107, asparagine 195, and asparagine 296. Residues aspartate 323 and histidine 326 contribute to the active site.

The protein belongs to the 'GDSL' lipolytic enzyme family.

It localises to the secreted. This is GDSL esterase/lipase 6 (GLIP6) from Arabidopsis thaliana (Mouse-ear cress).